The chain runs to 281 residues: Polyamine aminopropyltransferase (281 aa).

One can recognise a PABS domain in the interval Asp2–Lys236. Gln31 provides a ligand contact to S-methyl-5'-thioadenosine. Spermidine is bound by residues His62 and Asp86. S-methyl-5'-thioadenosine-binding positions include Glu106 and Asp138–Gly139. Asp156 acts as the Proton acceptor in catalysis. Asp156–Asp159 contributes to the spermidine binding site.

It belongs to the spermidine/spermine synthase family. In terms of assembly, homodimer or homotetramer.

It localises to the cytoplasm. The catalysed reaction is S-adenosyl 3-(methylsulfanyl)propylamine + putrescine = S-methyl-5'-thioadenosine + spermidine + H(+). Its pathway is amine and polyamine biosynthesis; spermidine biosynthesis; spermidine from putrescine: step 1/1. In terms of biological role, catalyzes the irreversible transfer of a propylamine group from the amino donor S-adenosylmethioninamine (decarboxy-AdoMet) to putrescine (1,4-diaminobutane) to yield spermidine. This is Polyamine aminopropyltransferase from Clostridium tetani (strain Massachusetts / E88).